We begin with the raw amino-acid sequence, 502 residues long: ATP synthase subunit alpha (502 aa).

An ATP-binding site is contributed by 169–176 (GDRQTGKT).

It belongs to the ATPase alpha/beta chains family. As to quaternary structure, F-type ATPases have 2 components, CF(1) - the catalytic core - and CF(0) - the membrane proton channel. CF(1) has five subunits: alpha(3), beta(3), gamma(1), delta(1), epsilon(1). CF(0) has three main subunits: a(1), b(2) and c(9-12). The alpha and beta chains form an alternating ring which encloses part of the gamma chain. CF(1) is attached to CF(0) by a central stalk formed by the gamma and epsilon chains, while a peripheral stalk is formed by the delta and b chains.

Its subcellular location is the cell inner membrane. It carries out the reaction ATP + H2O + 4 H(+)(in) = ADP + phosphate + 5 H(+)(out). Its function is as follows. Produces ATP from ADP in the presence of a proton gradient across the membrane. The alpha chain is a regulatory subunit. In Nitratidesulfovibrio vulgaris (strain ATCC 29579 / DSM 644 / CCUG 34227 / NCIMB 8303 / VKM B-1760 / Hildenborough) (Desulfovibrio vulgaris), this protein is ATP synthase subunit alpha.